A 383-amino-acid polypeptide reads, in one-letter code: GDSL esterase/lipase At1g28610 (383 aa).

The N-terminal stretch at 1–22 (MASLDSLVSFFLSTLFVTIVSS) is a signal peptide. The active-site Nucleophile is Ser-38. Asn-134, Asn-184, and Asn-315 each carry an N-linked (GlcNAc...) asparagine glycan. Active-site residues include Asp-340 and His-343.

Belongs to the 'GDSL' lipolytic enzyme family.

It localises to the secreted. The polypeptide is GDSL esterase/lipase At1g28610 (Arabidopsis thaliana (Mouse-ear cress)).